The following is a 193-amino-acid chain: Molybdenum cofactor guanylyltransferase (193 aa).

Residues 8–10 (LAG), Lys21, Asp67, and Asp98 contribute to the GTP site. Asp98 lines the Mg(2+) pocket.

Belongs to the MobA family. As to quaternary structure, monomer. The cofactor is Mg(2+).

The protein localises to the cytoplasm. It catalyses the reaction Mo-molybdopterin + GTP + H(+) = Mo-molybdopterin guanine dinucleotide + diphosphate. Transfers a GMP moiety from GTP to Mo-molybdopterin (Mo-MPT) cofactor (Moco or molybdenum cofactor) to form Mo-molybdopterin guanine dinucleotide (Mo-MGD) cofactor. In Cereibacter sphaeroides (strain ATCC 17023 / DSM 158 / JCM 6121 / CCUG 31486 / LMG 2827 / NBRC 12203 / NCIMB 8253 / ATH 2.4.1.) (Rhodobacter sphaeroides), this protein is Molybdenum cofactor guanylyltransferase.